The primary structure comprises 181 residues: Protein GrpE (181 aa).

It belongs to the GrpE family. As to quaternary structure, homodimer.

The protein localises to the cytoplasm. Participates actively in the response to hyperosmotic and heat shock by preventing the aggregation of stress-denatured proteins, in association with DnaK and GrpE. It is the nucleotide exchange factor for DnaK and may function as a thermosensor. Unfolded proteins bind initially to DnaJ; upon interaction with the DnaJ-bound protein, DnaK hydrolyzes its bound ATP, resulting in the formation of a stable complex. GrpE releases ADP from DnaK; ATP binding to DnaK triggers the release of the substrate protein, thus completing the reaction cycle. Several rounds of ATP-dependent interactions between DnaJ, DnaK and GrpE are required for fully efficient folding. The protein is Protein GrpE of Leptothrix cholodnii (strain ATCC 51168 / LMG 8142 / SP-6) (Leptothrix discophora (strain SP-6)).